Consider the following 915-residue polypeptide: Mitogen-activated protein kinase kinae kinase MST11 (915 aa).

Disordered regions lie at residues 1-65, 134-171, and 183-249; these read MAML…PKHW, KKRNRDSFAGHESMYTPVSESPSKPFHSSSRVMPNPSV, and GMAY…TRTD. Residues 26 to 45 show a composition bias toward low complexity; the sequence is AQASYPPSRRAPAVPPASQS. In terms of domain architecture, SAM spans 65–128; the sequence is WDEDKVCEYL…FLSIKKLRTK (64 aa). 2 stretches are compositionally biased toward low complexity: residues 152–163 and 188–203; these read SESPSKPFHSSS and PSRPTTSSRPTSPLPS. The region spanning 263-353 is the Ras-associating domain; it reads NQDVIRVIST…NRLILRRVPA (91 aa). A Protein kinase domain is found at 641 to 911; sequence WMKGALIGQG…ADDLMLSPFL (271 aa). ATP contacts are provided by residues 647–655 and Lys670; that span reads IGQGSFGCV.

It belongs to the protein kinase superfamily. STE Ser/Thr protein kinase family. MAP kinase kinase kinase subfamily. As to quaternary structure, interacts with the adapter protein MST50.

The catalysed reaction is L-seryl-[protein] + ATP = O-phospho-L-seryl-[protein] + ADP + H(+). It carries out the reaction L-threonyl-[protein] + ATP = O-phospho-L-threonyl-[protein] + ADP + H(+). Its function is as follows. Mitogen-activated protein kinase kinase kinase; part of the MST11-MST7-PMK1 MAP kinase (MAPK) cascade that is essential for appressorium formation, penetration and invasive growth. The MST11-MST7-PMK1 MAP kinase cascade transduces signals from the cell surface sensors MDB2 and SHO1 that recognize various surface signals such as surface hydrophobicity, cutin monomers, and rice leaf waxes. MST11 acts as the upstream MAPKKK that directly phosphorylates MAPKK MST7. MST11 but not MST7 may also be involved in the OSM1 MAPK pathway in response to osmotic stresses. The sequence is that of Mitogen-activated protein kinase kinae kinase MST11 from Pyricularia oryzae (strain 70-15 / ATCC MYA-4617 / FGSC 8958) (Rice blast fungus).